Consider the following 870-residue polypeptide: Phenylalanine--tRNA ligase beta subunit (870 aa).

Residues 39–148 (AADLQKFEVA…EDAVVGEPFT (110 aa)) enclose the tRNA-binding domain. The region spanning 427 to 551 (PAKKTLDFPA…RIYGYDKIES (125 aa)) is the B5 domain. The region spanning 450-498 (LLHNEANKGEFVGNTEHSIAAYKEVREDASTGLTPKLPLEASYVKGLNI) is the RPE1 insert domain. Mg(2+)-binding residues include aspartate 529, aspartate 535, glutamate 538, and glutamate 539. Residues 776-869 (SDYQANFRDY…IEQKFQGTLR (94 aa)) form the FDX-ACB domain.

The protein belongs to the phenylalanyl-tRNA synthetase beta subunit family. Type 1 subfamily. In terms of assembly, tetramer of two alpha and two beta subunits. Requires Mg(2+) as cofactor.

The protein localises to the cytoplasm. It catalyses the reaction tRNA(Phe) + L-phenylalanine + ATP = L-phenylalanyl-tRNA(Phe) + AMP + diphosphate + H(+). The sequence is that of Phenylalanine--tRNA ligase beta subunit (pheT) from Rickettsia bellii (strain RML369-C).